Here is a 435-residue protein sequence, read N- to C-terminus: Asparagine--tRNA ligase (435 aa).

The protein belongs to the class-II aminoacyl-tRNA synthetase family. Homodimer.

Its subcellular location is the cytoplasm. The enzyme catalyses tRNA(Asn) + L-asparagine + ATP = L-asparaginyl-tRNA(Asn) + AMP + diphosphate + H(+). The polypeptide is Asparagine--tRNA ligase (Leptospira interrogans serogroup Icterohaemorrhagiae serovar copenhageni (strain Fiocruz L1-130)).